Here is a 213-residue protein sequence, read N- to C-terminus: tRNA (guanine-N(7)-)-methyltransferase (213 aa).

4 residues coordinate S-adenosyl-L-methionine: Glu44, Glu69, Asp96, and Asp118. The active site involves Asp118. Residues Lys122, Asp154, and 191–194 contribute to the substrate site; that span reads TEYE.

This sequence belongs to the class I-like SAM-binding methyltransferase superfamily. TrmB family.

It carries out the reaction guanosine(46) in tRNA + S-adenosyl-L-methionine = N(7)-methylguanosine(46) in tRNA + S-adenosyl-L-homocysteine. Its pathway is tRNA modification; N(7)-methylguanine-tRNA biosynthesis. In terms of biological role, catalyzes the formation of N(7)-methylguanine at position 46 (m7G46) in tRNA. The polypeptide is tRNA (guanine-N(7)-)-methyltransferase (Exiguobacterium sibiricum (strain DSM 17290 / CCUG 55495 / CIP 109462 / JCM 13490 / 255-15)).